We begin with the raw amino-acid sequence, 339 residues long: tRNA N6-adenosine threonylcarbamoyltransferase (339 aa).

2 residues coordinate Fe cation: H111 and H115. Substrate is bound by residues 134 to 138 (LVSGG), D167, G180, and N270. D298 provides a ligand contact to Fe cation.

It belongs to the KAE1 / TsaD family. It depends on Fe(2+) as a cofactor.

It is found in the cytoplasm. The catalysed reaction is L-threonylcarbamoyladenylate + adenosine(37) in tRNA = N(6)-L-threonylcarbamoyladenosine(37) in tRNA + AMP + H(+). Functionally, required for the formation of a threonylcarbamoyl group on adenosine at position 37 (t(6)A37) in tRNAs that read codons beginning with adenine. Is involved in the transfer of the threonylcarbamoyl moiety of threonylcarbamoyl-AMP (TC-AMP) to the N6 group of A37, together with TsaE and TsaB. TsaD likely plays a direct catalytic role in this reaction. This Alkalilimnicola ehrlichii (strain ATCC BAA-1101 / DSM 17681 / MLHE-1) protein is tRNA N6-adenosine threonylcarbamoyltransferase.